A 134-amino-acid polypeptide reads, in one-letter code: Photosystem II lipoprotein Psb27 (134 aa).

The signal sequence occupies residues 1-24 (MSFLKNQLSRLLALILVVAIGLTA). The N-palmitoyl cysteine moiety is linked to residue Cys25. Cys25 carries S-diacylglycerol cysteine lipidation.

This sequence belongs to the Psb27 family. As to quaternary structure, monomer. Forms a complex with a monomeric, partially assembled PSII. This is probably the complex in which D1 is assembled and/or replaced. Present in 6-10% of PSII complexes; mostly in monomeric PSII. These PSII do not evolve oxygen, do not have an assembled calcium-manganese-oxide cluster. Psb27-containing PSII seem to be assembly intermediates; a wild-type strain includes the intrinsic membrane proteins, Psb27, Pbs28, substoichiometric amounts of PsbO and PsbQ but no PsbU or PsbV, while a ctpA deletion mutant includes the intrinsic membrane proteins (D1 as precursor), Psb27, a very low amount of PsbO and PsbQ, but no PsbU or PsbV. Small amounts of Psb27 interact with the lumenal domain of CP43 (psbC) in wild-type and a ctpA mutant. A small amount can also be detected in monomeric and trimeric photosystem I (PSI), possibly via association with PsaB.

Its subcellular location is the cellular thylakoid membrane. Its function is as follows. Plays a role in the repair and/or biogenesis of the calcium-manganese-oxide cluster on the lumenal face of the thylakoid membrane. Photosystem II (PSII) complexes containing this protein are monomeric, are assembly intermediates lacking the calcium-manganese-oxide cluster and miss some of the lumenal subunits. Probably blocks binding of some of the small lumenal subunits. This is Photosystem II lipoprotein Psb27 from Synechocystis sp. (strain ATCC 27184 / PCC 6803 / Kazusa).